Consider the following 315-residue polypeptide: uncharacterized protein (315 aa).

The Cytoplasmic portion of the chain corresponds to 1–38 (MDVLLSLPQPELFKTTVIPFLANRNIIKSEAILSNLHS). Residues 39 to 59 (IFYVAIFYHIWFLFGKWILFP) traverse the membrane as a helical segment. At 60–101 (HLVKWKLDYDQKHNVKKDEKTTSERQAQHYKKKYTSLINQSS) the chain is on the lumenal side. One can recognise a TLC domain in the interval 95 to 302 (SLINQSSVHL…MVSVAAKVLK (208 aa)). A helical transmembrane segment spans residues 102-122 (VHLISLLQSIVVLYYSLKFLL). Over 123-144 (DPKASAEPYQTSHSRVFTENRD) the chain is Cytoplasmic. The chain crosses the membrane as a helical span at residues 145–165 (TQVICIFAIGYFVWDIYISTM). At 166–170 (YSTFP) the chain is on the lumenal side. Residues 171–190 (FVVHGIISTVVFCIGLKPYI) form a helical membrane-spanning segment. Residues 191 to 225 (QYYAPVFLMFELSNPSLNFRWFGIKFLPQKSKFCS) are Cytoplasmic-facing. A helical transmembrane segment spans residues 226-246 (LLLLLNNLTLMVVFFAARIAW). Residues 247-264 (GWFQIGKLCYDFYQVRNE) lie on the Lumenal side of the membrane. The chain crosses the membrane as a helical span at residues 265–285 (PGFLVFDTIVILAGNFVLDIL). The Cytoplasmic portion of the chain corresponds to 286-315 (NVIWFSTMVSVAAKVLKKGESVDKVTKNEQ).

The protein resides in the endoplasmic reticulum membrane. This is an uncharacterized protein from Saccharomyces cerevisiae (strain ATCC 204508 / S288c) (Baker's yeast).